A 255-amino-acid chain; its full sequence is Glucanase inhibitor protein 4 (255 aa).

Residues 1–21 (MKSITTASFALILFGVGAASA) form the signal peptide. The region spanning 29 to 255 (VLGGGAVPSG…ESLGMDQLGH (227 aa)) is the Peptidase S1 domain. A disulfide bridge connects residues C56 and C72. Residues N90, N105, N110, and N160 are each glycosylated (N-linked (GlcNAc...) asparagine). 2 disulfides stabilise this stretch: C180-C192 and C202-C235.

Belongs to the peptidase S1 family. As to quaternary structure, forms an apoplastic complex with host endoglucanases in tomato leaves during P.infestans infection.

The protein localises to the secreted. Its function is as follows. Secreted effector that suppresses host plant glucan elicitor-mediated defense responses. Targets host endoglucanases and inhibits the endoglucanase-mediated release of elicitor-active glucan oligosaccharides from P.infestans cell walls. This Phytophthora infestans (Potato late blight agent) protein is Glucanase inhibitor protein 4.